Here is a 607-residue protein sequence, read N- to C-terminus: Siderophore iron transporter mirC (607 aa).

Transmembrane regions (helical) follow at residues 67-89 (LVIAYISIFLMAFCTSLEGQTIM), 129-148 (VFGRFEAFCVSILIYVLGYI), 186-208 (SLLNRALLALLPELPFLVTVWIG), 223-245 (WGYGMWSIILPASFLPLALSLLL), 279-301 (IFGLALLSAAVTLILVPLTLAAN), 311-328 (IVAMIVIGVVCLILLPFW), 349-368 (TALAGCCLAFFYFMAFYFSV), 388-410 (GRVTQTFAFTSTIAAFGVSILIK), 417-436 (VYVTLGCVIYMTGLLLMLLY), 446-468 (VLGTQVIVGMGGGLLNVPVQLGV), 481-503 (TAMFLTSMEMGGAVGAAISGAVW), and 557-574 (LLVLALLATLPLIPLSLL). Positions 584 to 593 (SESSDHDDAS) are enriched in basic and acidic residues. Residues 584 to 607 (SESSDHDDASPRNGLGPGERAKRT) form a disordered region.

The protein belongs to the major facilitator superfamily.

It localises to the membrane. This is Siderophore iron transporter mirC (mirC) from Emericella nidulans (strain FGSC A4 / ATCC 38163 / CBS 112.46 / NRRL 194 / M139) (Aspergillus nidulans).